The following is a 207-amino-acid chain: Recombination protein RecR (207 aa).

The segment at 60–75 (CRHCHNISDSDVCTIC) adopts a C4-type zinc-finger fold. Positions 83 to 178 (STLCVVENIR…RVSVIARGIA (96 aa)) constitute a Toprim domain.

It belongs to the RecR family.

Its function is as follows. May play a role in DNA repair. It seems to be involved in an RecBC-independent recombinational process of DNA repair. It may act with RecF and RecO. The chain is Recombination protein RecR from Porphyromonas gingivalis (strain ATCC BAA-308 / W83).